The following is a 957-amino-acid chain: Glycine dehydrogenase (decarboxylating) (957 aa).

Lys708 bears the N6-(pyridoxal phosphate)lysine mark.

It belongs to the GcvP family. In terms of assembly, the glycine cleavage system is composed of four proteins: P, T, L and H. Requires pyridoxal 5'-phosphate as cofactor.

It carries out the reaction N(6)-[(R)-lipoyl]-L-lysyl-[glycine-cleavage complex H protein] + glycine + H(+) = N(6)-[(R)-S(8)-aminomethyldihydrolipoyl]-L-lysyl-[glycine-cleavage complex H protein] + CO2. The glycine cleavage system catalyzes the degradation of glycine. The P protein binds the alpha-amino group of glycine through its pyridoxal phosphate cofactor; CO(2) is released and the remaining methylamine moiety is then transferred to the lipoamide cofactor of the H protein. This Salmonella arizonae (strain ATCC BAA-731 / CDC346-86 / RSK2980) protein is Glycine dehydrogenase (decarboxylating).